A 177-amino-acid chain; its full sequence is Thymidine kinase (177 aa).

Gly-11–Ser-18 is a binding site for ATP. Glu-83 functions as the Proton acceptor in the catalytic mechanism. Phe-113 is a binding site for substrate. 2 residues coordinate Zn(2+): Cys-138 and Cys-141. Ile-157–Gly-161 lines the substrate pocket. Residues Cys-170 and Cys-173 each contribute to the Zn(2+) site.

This sequence belongs to the thymidine kinase family. Homotetramer. Two molecules of substrate bind to each enzyme tetramer.

The enzyme catalyses thymidine + ATP = dTMP + ADP + H(+). Its function is as follows. Phosphorylates thymidine and thymidine analogs, such as azidothymidine (AZT). Part of the salvage pathway for pyrimidine deoxyribonucleotide synthesis. The chain is Thymidine kinase (OPG101) from Variola virus.